A 98-amino-acid chain; its full sequence is MSPILINMLLAFTISLIGLLIYRSHMMSSLLCLEGMMLSLFILTSTLALTMHFTLMTMMPIILLVFAACEAAIGLSLLVMVSNTYGLDYVQNLNLLQC.

3 helical membrane-spanning segments follow: residues 1-21, 30-50, and 61-81; these read MSPI…GLLI, LLCL…LALT, and IILL…LVMV.

The protein belongs to the complex I subunit 4L family. In terms of assembly, core subunit of respiratory chain NADH dehydrogenase (Complex I) which is composed of 45 different subunits.

Its subcellular location is the mitochondrion inner membrane. The enzyme catalyses a ubiquinone + NADH + 5 H(+)(in) = a ubiquinol + NAD(+) + 4 H(+)(out). Core subunit of the mitochondrial membrane respiratory chain NADH dehydrogenase (Complex I) which catalyzes electron transfer from NADH through the respiratory chain, using ubiquinone as an electron acceptor. Part of the enzyme membrane arm which is embedded in the lipid bilayer and involved in proton translocation. The protein is NADH-ubiquinone oxidoreductase chain 4L (MT-ND4L) of Chrysochloris asiatica (Cape golden mole).